The sequence spans 412 residues: cAMP-dependent protein kinase regulatory subunit (412 aa).

Polar residues predominate over residues 1–11 (MSNYSHSSNNP). Residues 1 to 146 (MSNYSHSSNN…TPPSHPKSEE (146 aa)) form a disordered region. Residues 16 to 29 (STKEDKPSSFHKIA) show a composition bias toward basic and acidic residues. Residues 23 to 159 (SSFHKIAEDE…RLKTAVSNNF (137 aa)) form a dimerization and phosphorylation region. 2 stretches are compositionally biased toward polar residues: residues 49-60 (NADNSAGGNNPL) and 119-138 (TSVSAESLNPTSAGSDSWTP). Ser-120 carries the phosphoserine modification. 3',5'-cyclic AMP-binding positions include 160 to 291 (LFSH…EEVP), Glu-238, Arg-247, 292 to 405 (LLSS…TEYS), Glu-359, and Arg-368.

This sequence belongs to the cAMP-dependent kinase regulatory chain family. In terms of assembly, tetramer, composed of 2 regulatory (R) and 2 catalytic (C) subunits. In the presence of cAMP it dissociates into 2 active monomeric C subunits and an R dimer.

The chain is cAMP-dependent protein kinase regulatory subunit (pkaR) from Emericella nidulans (strain FGSC A4 / ATCC 38163 / CBS 112.46 / NRRL 194 / M139) (Aspergillus nidulans).